We begin with the raw amino-acid sequence, 326 residues long: Vitamin B12 import system permease protein BtuC (326 aa).

9 helical membrane-spanning segments follow: residues W15–E35, L61–F81, P88–G108, L112–L132, L146–F166, G184–I204, G240–I260, V274–A294, and E302–L322.

It belongs to the binding-protein-dependent transport system permease family. FecCD subfamily. In terms of assembly, the complex is composed of two ATP-binding proteins (BtuD), two transmembrane proteins (BtuC) and a solute-binding protein (BtuF).

It is found in the cell inner membrane. Part of the ABC transporter complex BtuCDF involved in vitamin B12 import. Involved in the translocation of the substrate across the membrane. The protein is Vitamin B12 import system permease protein BtuC of Shigella sonnei (strain Ss046).